A 606-amino-acid polypeptide reads, in one-letter code: Membrane protein insertase YidC (606 aa).

Residues L8 to P28 traverse the membrane as a helical segment. Residues T59–P78 are compositionally biased toward low complexity. The disordered stretch occupies residues T59–R79. Transmembrane regions (helical) follow at residues M378–W398, L448–I468, S506–L526, and I542–I562.

Belongs to the OXA1/ALB3/YidC family. Type 1 subfamily. Interacts with the Sec translocase complex via SecD. Specifically interacts with transmembrane segments of nascent integral membrane proteins during membrane integration.

It localises to the cell inner membrane. Its function is as follows. Required for the insertion and/or proper folding and/or complex formation of integral membrane proteins into the membrane. Involved in integration of membrane proteins that insert both dependently and independently of the Sec translocase complex, as well as at least some lipoproteins. Aids folding of multispanning membrane proteins. The polypeptide is Membrane protein insertase YidC (Dinoroseobacter shibae (strain DSM 16493 / NCIMB 14021 / DFL 12)).